The following is a 326-amino-acid chain: Flotillin-like protein FloA (326 aa).

A helical transmembrane segment spans residues 3 to 23 (FTTIVVILLVIACIVVLFFIG).

The protein belongs to the flotillin-like FloA family. Homooligomerizes.

The protein localises to the cell membrane. Its subcellular location is the membrane raft. Functionally, found in functional membrane microdomains (FMM) that may be equivalent to eukaryotic membrane rafts. FMMs are highly dynamic and increase in number as cells age. Flotillins are thought to be important factors in membrane fluidity. This Desulforapulum autotrophicum (strain ATCC 43914 / DSM 3382 / VKM B-1955 / HRM2) (Desulfobacterium autotrophicum) protein is Flotillin-like protein FloA.